Consider the following 533-residue polypeptide: Beta-1,4 N-acetylgalactosaminyltransferase 1 (533 aa).

Topologically, residues 1–7 (MRLDRRA) are cytoplasmic. A helical; Signal-anchor for type II membrane protein membrane pass occupies residues 8-25 (LYALVLLLACASLGLLYA). At 26–533 (STRDAPGLPN…KHRLQCMTAE (508 aa)) the chain is on the lumenal side. N-linked (GlcNAc...) asparagine glycans are attached at residues Asn-79 and Asn-274. Cys-429 and Cys-476 are joined by a disulfide.

Belongs to the glycosyltransferase 2 family. Homodimer; disulfide-linked. In terms of tissue distribution, strongly expressed in brain, testis, spleen, and to a lesser extent in liver.

The protein localises to the golgi apparatus membrane. The enzyme catalyses a ganglioside GM3 (d18:1(4E)) + UDP-N-acetyl-alpha-D-galactosamine = a ganglioside GM2 (d18:1(4E)) + UDP + H(+). The catalysed reaction is a ganglioside GD3 (d18:1(4E)) + UDP-N-acetyl-alpha-D-galactosamine = a ganglioside GD2 (d18:1(4E)) + UDP + H(+). It catalyses the reaction a ganglioside GM3 + UDP-N-acetyl-alpha-D-galactosamine = a ganglioside GM2 + UDP + H(+). It carries out the reaction a ganglioside GD3 + UDP-N-acetyl-alpha-D-galactosamine = a ganglioside GD2 + UDP + H(+). The enzyme catalyses a ganglioside GD1a + UDP-N-acetyl-alpha-D-galactosamine = a ganglioside GalNAc-GD1a + UDP + H(+). The catalysed reaction is a ganglioside GT3 (d18:1(4E)) + UDP-N-acetyl-alpha-D-galactosamine = a ganglioside GT2 (d18:1(4E)) + UDP + H(+). It catalyses the reaction a beta-D-Gal-(1-&gt;4)-beta-D-Glc-(1&lt;-&gt;1)-Cer(d18:1(4E)) + UDP-N-acetyl-alpha-D-galactosamine = a ganglioside GA2 (d18:1(4E)) + UDP + H(+). It carries out the reaction a neolactoside IV(3)-alpha-NeuGc-nLc4Cer + UDP-N-acetyl-alpha-D-galactosamine = a neolactoside IV(4)-beta-GalNAc-IV(3)-alpha-NeuGc-nLc4Cer + UDP + H(+). The protein operates within sphingolipid metabolism. Involved in the biosynthesis of gangliosides GM2, GD2, GT2 and GA2 from GM3, GD3, GT3 and GA3, respectively. The chain is Beta-1,4 N-acetylgalactosaminyltransferase 1 from Rattus norvegicus (Rat).